The following is a 603-amino-acid chain: Penicillin-binding protein activator LpoA (603 aa).

Positions 1–26 (MANMTPRKNSVTRLIAPVALALTLAA) are cleaved as a signal peptide. Cys-27 carries the N-palmitoyl cysteine lipid modification. The S-diacylglycerol cysteine moiety is linked to residue Cys-27.

The protein belongs to the LpoA family. In terms of assembly, interacts with PBP1a.

It localises to the cell outer membrane. Its function is as follows. Regulator of peptidoglycan synthesis that is essential for the function of penicillin-binding protein 1A (PBP1a). The polypeptide is Penicillin-binding protein activator LpoA (Aliivibrio fischeri (strain ATCC 700601 / ES114) (Vibrio fischeri)).